The primary structure comprises 253 residues: Ubiquinone/menaquinone biosynthesis C-methyltransferase UbiE (253 aa).

S-adenosyl-L-methionine is bound by residues Thr-76, Asp-97, 125–126 (NA), and Ser-142.

Belongs to the class I-like SAM-binding methyltransferase superfamily. MenG/UbiE family.

It carries out the reaction a 2-demethylmenaquinol + S-adenosyl-L-methionine = a menaquinol + S-adenosyl-L-homocysteine + H(+). The catalysed reaction is a 2-methoxy-6-(all-trans-polyprenyl)benzene-1,4-diol + S-adenosyl-L-methionine = a 5-methoxy-2-methyl-3-(all-trans-polyprenyl)benzene-1,4-diol + S-adenosyl-L-homocysteine + H(+). Its pathway is quinol/quinone metabolism; menaquinone biosynthesis; menaquinol from 1,4-dihydroxy-2-naphthoate: step 2/2. It functions in the pathway cofactor biosynthesis; ubiquinone biosynthesis. Its function is as follows. Methyltransferase required for the conversion of demethylmenaquinol (DMKH2) to menaquinol (MKH2) and the conversion of 2-polyprenyl-6-methoxy-1,4-benzoquinol (DDMQH2) to 2-polyprenyl-3-methyl-6-methoxy-1,4-benzoquinol (DMQH2). This is Ubiquinone/menaquinone biosynthesis C-methyltransferase UbiE from Xanthomonas axonopodis pv. citri (strain 306).